The sequence spans 608 residues: MSMPFSVLAETFEKLERVTARTQMLLYLVELFKKTPPEIIDKVVYFIQGKLWPDWKGLPELGIGEKMLIKAASIALHVSEKQIEQLVKKLGDTGKAIEMIKREKQQKQKAVGLLAFMQKPSGGESTLTVEKVYDTLARIALVQGEGSRDIKLKLLAGLLAEASPREAKYIARFVEGRLRLGVGDATIMEALAVVYGGSAAMRSVVERAYNLRADLGMVAKILATQGIDALKNIKPEVGVPIRPMLAERLNDPVEIIKKLGGRALVEYKYDGERAQIHKKGDKIWIFSRRLENITHMYPDVVEMAKKGIKAEEAIVEGEIVAIDPETGEFRPFQVLMHRRRKKDVHAVLSEIPVAVFLFDTLYVNGEDLTLKPLPARHEVLEKIIEQSDTWRIAEGIVTSDPQELESFFLKAIEDGAEGVMAKAIHDRSIYQAGARGWLWIKYKRDYKSEMSDTVDLVVIGAFYGKGRRGGKFGALLMAAYDPDTDTFKSVCKVGSGFTDEDLERLDDMLKPYISDKKPARVDSQMKPDVWVEPTLVAEIIGAELTLSPIHTCCYGWVKSGAGISIRFPRFIRWRPDKGPEDATTTKELYEMYKRQLRRIKEEEAPTGV.

E266 contributes to the ATP binding site. The active-site N6-AMP-lysine intermediate is the K268. R273, R288, E318, F358, R435, and K441 together coordinate ATP.

It belongs to the ATP-dependent DNA ligase family. Mg(2+) is required as a cofactor. Mn(2+) serves as cofactor.

The catalysed reaction is ATP + (deoxyribonucleotide)n-3'-hydroxyl + 5'-phospho-(deoxyribonucleotide)m = (deoxyribonucleotide)n+m + AMP + diphosphate.. It catalyses the reaction ADP + (deoxyribonucleotide)n-3'-hydroxyl + 5'-phospho-(deoxyribonucleotide)m = (deoxyribonucleotide)n+m + AMP + phosphate.. It carries out the reaction GTP + (deoxyribonucleotide)n-3'-hydroxyl + 5'-phospho-(deoxyribonucleotide)m = (deoxyribonucleotide)n+m + GMP + diphosphate.. DNA ligase that seals nicks in double-stranded DNA during DNA replication, DNA recombination and DNA repair. Can use ATP, ADP and GTP, but not CTP, TTP or NAD(+). The sequence is that of DNA ligase from Hyperthermus butylicus (strain DSM 5456 / JCM 9403 / PLM1-5).